Reading from the N-terminus, the 442-residue chain is Hydrolase phmG (442 aa).

Ser259 functions as the Nucleophile in the catalytic mechanism.

The protein belongs to the AB hydrolase superfamily. FUS2 hydrolase family. As to quaternary structure, homodimer.

It participates in mycotoxin biosynthesis. Hydrolyase; part of the gene cluster that mediates the biosynthesis of the mycotoxins phomacins, leucine-derived cytochalasans with potent actin polymerization-inhibitory activities and monocot-specific antigerminative activities. The first step in the pathway is catalyzed by the hybrid PKS-NRPS phmA, assisted by the enoyl reductase phmE, that are responsible for fusion of the leucine precursor and the polyketide backbone to produce a 2-pyrrolidone intermediate. The polyketide synthase module (PKS) of phmA is responsible for the synthesis of the polyketide backbone and the downstream nonribosomal peptide synthetase (NRPS) amidates the carboxyl end of the polyketide with the leucine precursor. Because phmA lacks a designated enoylreductase (ER) domain, the required activity is provided the enoyl reductase phmE. Reduction by the hydrolyase phmG, followed by dehydration and intra-molecular Diels-Alder cyclization by the Diels-Alderase phmD then yield the required isoindolone-fused macrocycle. A number of oxidative steps catalyzed by the tailoring cytochrome P450 monooxygenase phmB, the FAD-linked oxidoreductase phmC and the short-chain dehydrogenase/reductase phmF, are further required to afford the final products, phomacin D and phomacin E. The polypeptide is Hydrolase phmG (Phaeosphaeria nodorum (strain SN15 / ATCC MYA-4574 / FGSC 10173) (Glume blotch fungus)).